We begin with the raw amino-acid sequence, 305 residues long: Glycine--tRNA ligase alpha subunit (305 aa).

This sequence belongs to the class-II aminoacyl-tRNA synthetase family. In terms of assembly, tetramer of two alpha and two beta subunits.

The protein localises to the cytoplasm. The enzyme catalyses tRNA(Gly) + glycine + ATP = glycyl-tRNA(Gly) + AMP + diphosphate. In Streptococcus pyogenes serotype M18 (strain MGAS8232), this protein is Glycine--tRNA ligase alpha subunit.